A 473-amino-acid polypeptide reads, in one-letter code: Asparagine--tRNA ligase (473 aa).

It belongs to the class-II aminoacyl-tRNA synthetase family. Homodimer.

It localises to the cytoplasm. The enzyme catalyses tRNA(Asn) + L-asparagine + ATP = L-asparaginyl-tRNA(Asn) + AMP + diphosphate + H(+). The protein is Asparagine--tRNA ligase of Treponema denticola (strain ATCC 35405 / DSM 14222 / CIP 103919 / JCM 8153 / KCTC 15104).